A 283-amino-acid chain; its full sequence is MRTQWPSPAKLNLFLYITGQRADGYHTLQTLFQFLDYGDTISIELRDDGDIRLLTPVEGVEHEDNLIVRAARLLMKTAADSGRLSTGSGANISIDKRLPMGGGLGGGSSNAATVLVALNHLWQCGLSMDELAEMGLTLGADVPVFVRGHAAFAEGVGEILMPVDPPEKWYLVAHPGVSIPTPVIFKDPELPRNTPKRSIETLLKCEFSNDCEVIARKRFREVDAVLSWLLEYAPSRLTGTGACVFAEFDTESEARQVLEQAPEWLNGFVAKGVNLSPLHRAML.

K10 is an active-site residue. 99-109 (PMGGGLGGGSS) contributes to the ATP binding site. D141 is an active-site residue.

It belongs to the GHMP kinase family. IspE subfamily. In terms of assembly, homodimer.

The enzyme catalyses 4-CDP-2-C-methyl-D-erythritol + ATP = 4-CDP-2-C-methyl-D-erythritol 2-phosphate + ADP + H(+). The protein operates within isoprenoid biosynthesis; isopentenyl diphosphate biosynthesis via DXP pathway; isopentenyl diphosphate from 1-deoxy-D-xylulose 5-phosphate: step 3/6. Functionally, catalyzes the phosphorylation of the position 2 hydroxy group of 4-diphosphocytidyl-2C-methyl-D-erythritol. The sequence is that of 4-diphosphocytidyl-2-C-methyl-D-erythritol kinase (ispE) from Escherichia coli O6:H1 (strain CFT073 / ATCC 700928 / UPEC).